A 228-amino-acid chain; its full sequence is Small ribosomal subunit protein uS2c (228 aa).

It belongs to the universal ribosomal protein uS2 family.

Its subcellular location is the plastid. It localises to the chloroplast. The protein is Small ribosomal subunit protein uS2c (rps2) of Mesostigma viride (Green alga).